The chain runs to 663 residues: Innate immunity activator protein (663 aa).

Residues 1 to 68 form a disordered region; that stretch reads MLQMPKLNEI…RLPTQPGPGW (68 aa). Low complexity predominate over residues 40–50; sequence RAQGQAGGARA. A coiled-coil region spans residues 118 to 147; that stretch reads AVHKQQRALEARLEACLEELRRLCLREAEL. Residues 164–170 carry the Nuclear localization signal (NLS) 1 motif; sequence PKVRRRI. 3 disordered regions span residues 242–362, 378–425, and 444–493; these read RRRN…ASSL, VPGQ…PRRR, and PLPH…RHRG. Over residues 259–272 the composition is skewed to low complexity; the sequence is ELSASDDSSLSDGL. Residues 282–298 show a composition bias toward pro residues; the sequence is PKPPPESPAPPSRPLPP. The span at 327–340 shows a compositional bias: basic and acidic residues; the sequence is TSLDHPYEKPRKSS. A Nuclear localization signal (NLS) 2 motif is present at residues 332-338; sequence PYEKPRK. Polar residues predominate over residues 350-361; it reads ATTPQDGPSASS. The short motif at 422–428 is the Nuclear localization signal (NLS) 3 element; it reads PRRRPTH. Over residues 455-475 the composition is skewed to low complexity; it reads EDSGSDVSSISHPTSPGSSSP.

Interacts with IRAK1, NOD2 and RIPK2; the interaction takes place upon PRR stimulation. Interacts with YWHAQ/14-3-3T; the interaction increases upon PRR stimulation and is required for cellular signaling pathway activation and cytokine secretion. Interacts (via N-terminal domain) with CYTH1 and CYTH2 (via their N-terminal domains). Interacts with FBXW11 and BTRC; associates with SCF E3 ubiquitin-protein ligase complexes. Highly expressed in intestinal myeloid-derived cells and expressed in monocyte-derived macrophages upon induction by PRR activation.

The protein resides in the nucleus. It is found in the cytoplasm. In terms of biological role, expressed in peripheral macrophages and intestinal myeloid-derived cells, is required for optimal PRR (pattern recognition receptor)-induced signaling, cytokine secretion, and bacterial clearance. Upon stimulation of a broad range of PRRs (pattern recognition receptor) such as NOD2 or TLR2, TLR3, TLR4, TLR5, TLR7 and TLR9, associates with YWHAQ/14-3-3T, which in turn leads to the recruitment and activation of MAP kinases and NF-kappa-B signaling complexes that amplifies PRR-induced downstream signals and cytokine secretion. In the intestine, regulates adherens junction stability by regulating the degradation of CYTH1 and CYTH2, probably acting as substrate cofactor for SCF E3 ubiquitin-protein ligase complexes. Stabilizes adherens junctions by limiting CYTH1-dependent ARF6 activation. This chain is Innate immunity activator protein, found in Homo sapiens (Human).